Consider the following 280-residue polypeptide: Retinoschisin (280 aa).

The N-terminal stretch at 1–23 (MHLPREAFLLALAGAFIFPSSQQ) is a signal peptide. In terms of domain architecture, F5/8 type C spans 119–275 (CPYHRPLGFE…IALRLELLLC (157 aa)). 2 cysteine pairs are disulfide-bonded: Cys-119–Cys-275 and Cys-166–Cys-198.

In terms of assembly, homooctamer of 4 homodimers; disulfide-linked. The homooctamer has a flat, cogwheel structure with a diameter of about 14 nm. Two stacked octamers can assemble to form a hexadecamer.

The protein localises to the secreted. It is found in the cell membrane. Its function is as follows. Binds negatively charged membrane lipids, such as phosphatidylserine and phosphoinositides. May play a role in cell-cell adhesion processes in the retina, via homomeric interaction between octamers present on the surface of two neighboring cells. Required for normal structure and function of the retina. This chain is Retinoschisin (xlrs1), found in Takifugu rubripes (Japanese pufferfish).